The following is a 425-amino-acid chain: Riboflavin biosynthesis protein RibBA (425 aa).

A DHBP synthase region spans residues methionine 1–lysine 204. D-ribulose 5-phosphate is bound by residues arginine 28–glutamate 29, aspartate 33, arginine 141–threonine 145, and glutamate 165. Glutamate 29 provides a ligand contact to Mg(2+). Histidine 144 is a binding site for Mg(2+). Residues histidine 205–leucine 425 are GTP cyclohydrolase II. Arginine 259–glutamate 263 serves as a coordination point for GTP. Zn(2+) contacts are provided by cysteine 264, cysteine 275, and cysteine 277. Residues glutamine 280, glutamate 303–arginine 305, and threonine 325 contribute to the GTP site. Aspartate 337 serves as the catalytic Proton acceptor; for GTP cyclohydrolase activity. The active-site Nucleophile; for GTP cyclohydrolase activity is the arginine 339. 2 residues coordinate GTP: threonine 360 and lysine 365.

It in the N-terminal section; belongs to the DHBP synthase family. This sequence in the C-terminal section; belongs to the GTP cyclohydrolase II family. It depends on Mg(2+) as a cofactor. Mn(2+) is required as a cofactor. The cofactor is Zn(2+).

It carries out the reaction D-ribulose 5-phosphate = (2S)-2-hydroxy-3-oxobutyl phosphate + formate + H(+). The enzyme catalyses GTP + 4 H2O = 2,5-diamino-6-hydroxy-4-(5-phosphoribosylamino)-pyrimidine + formate + 2 phosphate + 3 H(+). Its pathway is cofactor biosynthesis; riboflavin biosynthesis; 2-hydroxy-3-oxobutyl phosphate from D-ribulose 5-phosphate: step 1/1. The protein operates within cofactor biosynthesis; riboflavin biosynthesis; 5-amino-6-(D-ribitylamino)uracil from GTP: step 1/4. Its function is as follows. Catalyzes the conversion of D-ribulose 5-phosphate to formate and 3,4-dihydroxy-2-butanone 4-phosphate. Functionally, catalyzes the conversion of GTP to 2,5-diamino-6-ribosylamino-4(3H)-pyrimidinone 5'-phosphate (DARP), formate and pyrophosphate. The protein is Riboflavin biosynthesis protein RibBA of Mycolicibacterium paratuberculosis (strain ATCC BAA-968 / K-10) (Mycobacterium paratuberculosis).